A 441-amino-acid chain; its full sequence is Glutamyl-tRNA reductase (441 aa).

Substrate is bound by residues 49–52, Ser109, 114–116, and Gln120; these read TCNR and EGQ. Residue Cys50 is the Nucleophile of the active site. NADP(+) is bound at residue 198 to 203; it reads GAGRMS.

Belongs to the glutamyl-tRNA reductase family. As to quaternary structure, homodimer.

The enzyme catalyses (S)-4-amino-5-oxopentanoate + tRNA(Glu) + NADP(+) = L-glutamyl-tRNA(Glu) + NADPH + H(+). It participates in porphyrin-containing compound metabolism; protoporphyrin-IX biosynthesis; 5-aminolevulinate from L-glutamyl-tRNA(Glu): step 1/2. Its pathway is porphyrin-containing compound metabolism; chlorophyll biosynthesis. In terms of biological role, catalyzes the NADPH-dependent reduction of glutamyl-tRNA(Glu) to glutamate 1-semialdehyde (GSA). The sequence is that of Glutamyl-tRNA reductase from Prochlorococcus marinus (strain NATL1A).